The primary structure comprises 444 residues: Maturase K (444 aa).

Belongs to the intron maturase 2 family. MatK subfamily.

The protein localises to the plastid. It is found in the chloroplast. In terms of biological role, usually encoded in the trnK tRNA gene intron. Probably assists in splicing its own and other chloroplast group II introns. In Chamaecyparis lawsoniana (Lawson false cypress), this protein is Maturase K.